We begin with the raw amino-acid sequence, 149 residues long: MYRMQLLSCIALTLAVLANSAPTSSSKRETQQQLKQLQMDLKLLLEGVNNNKNPKLSKILTFKINMPKKATELKHLQCLEEELKPLEEMLKNFLSKDIKELMSNINVTVLGLKGSETRFTCEYDNETETIVEFLNKWITFCQSIISTLT.

A signal peptide spans 1 to 20 (MYRMQLLSCIALTLAVLANS). Thr-23 carries an O-linked (GalNAc...) threonine glycan. A disulfide bond links Cys-78 and Cys-121. Asn-106 carries N-linked (GlcNAc...) asparagine glycosylation.

It belongs to the IL-2 family.

It localises to the secreted. Cytokine produced by activated CD4-positive helper T-cells and to a lesser extend activated CD8-positive T-cells and natural killer (NK) cells that plays pivotal roles in the immune response and tolerance. Binds to a receptor complex composed of either the high-affinity trimeric IL-2R (IL2RA/CD25, IL2RB/CD122 and IL2RG/CD132) or the low-affinity dimeric IL-2R (IL2RB and IL2RG). Interaction with the receptor leads to oligomerization and conformation changes in the IL-2R subunits resulting in downstream signaling starting with phosphorylation of JAK1 and JAK3. In turn, JAK1 and JAK3 phosphorylate the receptor to form a docking site leading to the phosphorylation of several substrates including STAT5. This process leads to activation of several pathways including STAT, phosphoinositide-3-kinase/PI3K and mitogen-activated protein kinase/MAPK pathways. Functions as a T-cell growth factor and can increase NK-cell cytolytic activity as well. Promotes strong proliferation of activated B-cells and subsequently immunoglobulin production. Plays a pivotal role in regulating the adaptive immune system by controlling the survival and proliferation of regulatory T-cells, which are required for the maintenance of immune tolerance. Moreover, participates in the differentiation and homeostasis of effector T-cell subsets, including Th1, Th2, Th17 as well as memory CD8-positive T-cells. In Equus caballus (Horse), this protein is Interleukin-2 (IL2).